The chain runs to 415 residues: MDGKTYKLRASCNACNESKVRCSQTKPTCARCERNKTTCVYGLSRRTHKDAPPISLSHSHSHSHSGSQPHSHSGSRRSSVHIPNATATANATTTANYTSTTTPFMPLHENSMTSYPPQPSVDQFFAQQQPHHQQPSTAGPGPGILSPANLDLPSFMTPLPTPNEDHTNSLFSSFGNFAAGVGGVNGSVNNILTPLTGSPGTGTSASTSTDMFQQPQVQECTCHAGVMEQMASMSQPSRNEERRLSLDVQLSQLKRCIIASEASMGCGHHGNGDSEPINIISVAMLIGRIIDEFELMLNERIGRGTTMPERERSLSLDEATISIREPRLCWGVLELEDDDEVELRQRLYLLYFRKLERLLSQLNVFVRTLHDSRGGSCNPTFIMACEYIHLWLEKKAEGVKRLFPAADEYTGRIPS.

Positions 12 to 39 (CNACNESKVRCSQTKPTCARCERNKTTC) form a DNA-binding region, zn(2)-C6 fungal-type. The segment at 50 to 153 (DAPPISLSHS…ILSPANLDLP (104 aa)) is disordered. Composition is skewed to low complexity over residues 80–102 (VHIP…STTT) and 123–135 (QFFA…HQQP).

It is found in the nucleus. Functionally, transcriptional regulator that postively regulates the expression of the gene cluster that mediates the biosynthesis of flavoglaucin and congeners (including aspergin, dihydroauroglaucin and auroglaucin), prenylated salicylaldehyde derivatives carrying a saturated or an unsaturated C-7 side chain. The protein is Transcriptional regulator fogI of Aspergillus ruber (strain CBS 135680).